The primary structure comprises 603 residues: Polypeptide N-acetylgalactosaminyltransferase 9 (603 aa).

The Cytoplasmic segment spans residues 1–6; the sequence is MAVARK. Residues 7 to 29 traverse the membrane as a helical; Signal-anchor for type II membrane protein segment; sequence IRTLLTVNILVFVGIVLFSVYCR. The Lumenal segment spans residues 30-603; it reads LQGRSQELVR…IRNWIKHARH (574 aa). 2 disulfide bridges follow: Cys-141/Cys-372 and Cys-363/Cys-442. The catalytic subdomain A stretch occupies residues 150–261; it reads LPQVSVVFIF…TGWAEPALSR (112 aa). Residues Asp-191 and Arg-222 each coordinate substrate. Residues Asp-245, His-247, and His-377 each coordinate Mn(2+). A catalytic subdomain B region spans residues 318–380; the sequence is PIRTPAMIGC…PCSRVAHIER (63 aa). Arg-380 and Tyr-385 together coordinate substrate. Residue Asn-460 is glycosylated (N-linked (GlcNAc...) asparagine). A Ricin B-type lectin domain is found at 464-600; sequence TYGEVRNSKA…KWMIRNWIKH (137 aa). Intrachain disulfides connect Cys-477-Cys-493, Cys-525-Cys-540, and Cys-567-Cys-587.

The protein belongs to the glycosyltransferase 2 family. GalNAc-T subfamily. Requires Mn(2+) as cofactor. In terms of tissue distribution, specifically expressed in brain. Not expressed in heart, placenta, lung, liver, skeletal muscle, kidney, pancreas, spleen, thymus, prostate, testis, ovary, small intestine, colon and leukocyte. In brain, it is expressed in cerebellum, frontal lobe, temporal lobe, putamen and spinal cord, weakly expressed in cerebral cortex. Not expressed in medulla and occipital pole.

It localises to the golgi apparatus membrane. It catalyses the reaction L-seryl-[protein] + UDP-N-acetyl-alpha-D-galactosamine = a 3-O-[N-acetyl-alpha-D-galactosaminyl]-L-seryl-[protein] + UDP + H(+). The enzyme catalyses L-threonyl-[protein] + UDP-N-acetyl-alpha-D-galactosamine = a 3-O-[N-acetyl-alpha-D-galactosaminyl]-L-threonyl-[protein] + UDP + H(+). It participates in protein modification; protein glycosylation. In terms of biological role, catalyzes the initial reaction in O-linked oligosaccharide biosynthesis, the transfer of an N-acetyl-D-galactosamine residue to a serine or threonine residue on the protein receptor. Does not glycosylate apomucin or SDC3. This Homo sapiens (Human) protein is Polypeptide N-acetylgalactosaminyltransferase 9 (GALNT9).